The following is a 141-amino-acid chain: Putative pre-16S rRNA nuclease (141 aa).

It belongs to the YqgF nuclease family.

The protein resides in the cytoplasm. Its function is as follows. Could be a nuclease involved in processing of the 5'-end of pre-16S rRNA. This Cupriavidus pinatubonensis (strain JMP 134 / LMG 1197) (Cupriavidus necator (strain JMP 134)) protein is Putative pre-16S rRNA nuclease.